The primary structure comprises 436 residues: Protein Z-dependent protease inhibitor (436 aa).

A signal peptide spans 1–20 (MRVVSSLFLPVLLAEVWLVS). 3 N-linked (GlcNAc...) asparagine glycosylation sites follow: asparagine 23, asparagine 42, and asparagine 69. The interval 128-145 (AGPLILPALFKRVKETFS) is heparin-binding. Asparagine 172, asparagine 189, and asparagine 287 each carry an N-linked (GlcNAc...) asparagine glycan.

The protein belongs to the serpin family. In terms of processing, phosphorylated by FAM20C in the extracellular medium. As to expression, expressed by the liver and secreted in plasma.

It localises to the secreted. In terms of biological role, inhibits activity of the coagulation protease factor Xa in the presence of PROZ, calcium and phospholipids. Also inhibits factor XIa in the absence of cofactors. This Rattus norvegicus (Rat) protein is Protein Z-dependent protease inhibitor (Serpina10).